Reading from the N-terminus, the 181-residue chain is tRNA-splicing endonuclease (181 aa).

Residues Y118, H126, and K157 contribute to the active site.

Belongs to the tRNA-intron endonuclease family. Archaeal short subfamily. Homotetramer; although the tetramer contains four active sites, only two participate in the cleavage. Therefore, it should be considered as a dimer of dimers.

It catalyses the reaction pretRNA = a 3'-half-tRNA molecule with a 5'-OH end + a 5'-half-tRNA molecule with a 2',3'-cyclic phosphate end + an intron with a 2',3'-cyclic phosphate and a 5'-hydroxyl terminus.. Endonuclease that removes tRNA introns. Cleaves pre-tRNA at the 5'- and 3'-splice sites to release the intron. The products are an intron and two tRNA half-molecules bearing 2',3' cyclic phosphate and 5'-OH termini. Recognizes a pseudosymmetric substrate in which 2 bulged loops of 3 bases are separated by a stem of 4 bp. This chain is tRNA-splicing endonuclease, found in Hyperthermus butylicus (strain DSM 5456 / JCM 9403 / PLM1-5).